Consider the following 242-residue polypeptide: Segregation and condensation protein A (242 aa).

This sequence belongs to the ScpA family. As to quaternary structure, component of a cohesin-like complex composed of ScpA, ScpB and the Smc homodimer, in which ScpA and ScpB bind to the head domain of Smc. The presence of the three proteins is required for the association of the complex with DNA.

It localises to the cytoplasm. Its function is as follows. Participates in chromosomal partition during cell division. May act via the formation of a condensin-like complex containing Smc and ScpB that pull DNA away from mid-cell into both cell halves. This is Segregation and condensation protein A from Lactococcus lactis subsp. cremoris (strain MG1363).